We begin with the raw amino-acid sequence, 150 residues long: D-aminoacyl-tRNA deacylase (150 aa).

Positions 138-139 match the Gly-cisPro motif, important for rejection of L-amino acids motif; it reads GP.

Belongs to the DTD family. As to quaternary structure, homodimer.

The protein resides in the cytoplasm. The enzyme catalyses glycyl-tRNA(Ala) + H2O = tRNA(Ala) + glycine + H(+). It catalyses the reaction a D-aminoacyl-tRNA + H2O = a tRNA + a D-alpha-amino acid + H(+). In terms of biological role, an aminoacyl-tRNA editing enzyme that deacylates mischarged D-aminoacyl-tRNAs. Also deacylates mischarged glycyl-tRNA(Ala), protecting cells against glycine mischarging by AlaRS. Acts via tRNA-based rather than protein-based catalysis; rejects L-amino acids rather than detecting D-amino acids in the active site. By recycling D-aminoacyl-tRNA to D-amino acids and free tRNA molecules, this enzyme counteracts the toxicity associated with the formation of D-aminoacyl-tRNA entities in vivo and helps enforce protein L-homochirality. In Azobacteroides pseudotrichonymphae genomovar. CFP2, this protein is D-aminoacyl-tRNA deacylase.